A 495-amino-acid polypeptide reads, in one-letter code: Aspartyl/glutamyl-tRNA(Asn/Gln) amidotransferase subunit B (495 aa).

The protein belongs to the GatB/GatE family. GatB subfamily. Heterotrimer of A, B and C subunits.

The enzyme catalyses L-glutamyl-tRNA(Gln) + L-glutamine + ATP + H2O = L-glutaminyl-tRNA(Gln) + L-glutamate + ADP + phosphate + H(+). It carries out the reaction L-aspartyl-tRNA(Asn) + L-glutamine + ATP + H2O = L-asparaginyl-tRNA(Asn) + L-glutamate + ADP + phosphate + 2 H(+). Its function is as follows. Allows the formation of correctly charged Asn-tRNA(Asn) or Gln-tRNA(Gln) through the transamidation of misacylated Asp-tRNA(Asn) or Glu-tRNA(Gln) in organisms which lack either or both of asparaginyl-tRNA or glutaminyl-tRNA synthetases. The reaction takes place in the presence of glutamine and ATP through an activated phospho-Asp-tRNA(Asn) or phospho-Glu-tRNA(Gln). The polypeptide is Aspartyl/glutamyl-tRNA(Asn/Gln) amidotransferase subunit B (Methanosarcina acetivorans (strain ATCC 35395 / DSM 2834 / JCM 12185 / C2A)).